The following is a 430-amino-acid chain: Adenylosuccinate synthetase (430 aa).

GTP is bound by residues 17–23 (GDEGKGK) and 45–47 (GHT). D18 functions as the Proton acceptor in the catalytic mechanism. Mg(2+)-binding residues include D18 and G45. IMP is bound by residues 18 to 21 (DEGK), 43 to 46 (NAGH), T139, R153, N229, T244, and R308. H46 acts as the Proton donor in catalysis. 304-310 (TVTGRRR) lines the substrate pocket. Residues R310, 336–338 (KLD), and 418–420 (GVG) contribute to the GTP site.

It belongs to the adenylosuccinate synthetase family. Homodimer. It depends on Mg(2+) as a cofactor.

Its subcellular location is the cytoplasm. It catalyses the reaction IMP + L-aspartate + GTP = N(6)-(1,2-dicarboxyethyl)-AMP + GDP + phosphate + 2 H(+). Its pathway is purine metabolism; AMP biosynthesis via de novo pathway; AMP from IMP: step 1/2. Plays an important role in the de novo pathway and in the salvage pathway of purine nucleotide biosynthesis. Catalyzes the first committed step in the biosynthesis of AMP from IMP. The sequence is that of Adenylosuccinate synthetase from Cryptococcus neoformans var. neoformans serotype D (strain B-3501A) (Filobasidiella neoformans).